A 209-amino-acid chain; its full sequence is Mitochondrial import inner membrane translocase subunit Tim23 (209 aa).

A run of 3 helical transmembrane segments spans residues 73–93 (FELA…FGAM), 125–145 (ALWA…GVII), and 172–194 (GGLR…YALY).

The protein belongs to the Tim17/Tim22/Tim23 family. In terms of assembly, component of the TIM23 complex at least composed of TIMM23, TIMM17 (TIMM17A or TIMM17B) and TIMM50; within this complex, directly interacts with TIMM50. The complex interacts with the TIMM44 component of the PAM complex and with DNAJC15. Upon mitochondrial depolarization, interacts with PINK1; the interaction is required for PINK1 accumulation at the outer mitochondrial membrane, kinase activation by autophosphorylation and PRKN recruitement to mitochondria.

The protein resides in the mitochondrion inner membrane. Its function is as follows. Essential component of the TIM23 complex, a complex that mediates the translocation of transit peptide-containing proteins across the mitochondrial inner membrane. Has a role in the activation of stress-induced mitophagy by protecting PINK1 from OMA1-mediated degradation and facilitating its accumulation at the outer mitochondrial membrane in response to depolarization. The sequence is that of Mitochondrial import inner membrane translocase subunit Tim23 (TIMM23) from Bos taurus (Bovine).